Reading from the N-terminus, the 308-residue chain is Putative proline iminopeptidase (308 aa).

An AB hydrolase-1 domain is found at 30–290 (KPVLYIHGGP…LYVTNNAGHS (261 aa)). S105 serves as the catalytic Nucleophile. D261 is an active-site residue. Catalysis depends on H289, which acts as the Proton donor.

The protein belongs to the peptidase S33 family.

The protein resides in the cytoplasm. The catalysed reaction is Release of N-terminal proline from a peptide.. Specifically catalyzes the removal of N-terminal proline residues from peptides. The sequence is that of Putative proline iminopeptidase (pip) from Mycoplasma genitalium (strain ATCC 33530 / DSM 19775 / NCTC 10195 / G37) (Mycoplasmoides genitalium).